Consider the following 383-residue polypeptide: Cobalt-precorrin-5B C(1)-methyltransferase (383 aa).

Positions 1–24 (MQPSARRPFDLATPAPNGLRRGRT) are disordered.

This sequence belongs to the CbiD family.

The catalysed reaction is Co-precorrin-5B + S-adenosyl-L-methionine = Co-precorrin-6A + S-adenosyl-L-homocysteine. It participates in cofactor biosynthesis; adenosylcobalamin biosynthesis; cob(II)yrinate a,c-diamide from sirohydrochlorin (anaerobic route): step 6/10. Catalyzes the methylation of C-1 in cobalt-precorrin-5B to form cobalt-precorrin-6A. The protein is Cobalt-precorrin-5B C(1)-methyltransferase of Ralstonia nicotianae (strain ATCC BAA-1114 / GMI1000) (Ralstonia solanacearum).